The primary structure comprises 219 residues: uncharacterized protein (219 aa).

Positions 1-26 are cleaved as a signal peptide; it reads MNDRGVPNSRTGPSLLALLPAANSYA. 2 disordered regions span residues 36-57 and 88-219; these read AVGVGGGSYKSPTRGSPGTRGG and SGLG…GLCE. Positions 127-173 are enriched in low complexity; the sequence is LSPPSALGSSPAGRGRPAPAIAAAKSSPLSASAAPGRCGARPRAPSR. Residues 176–202 are compositionally biased toward basic residues; the sequence is RERRPRGNPRAPLRRGARGRRRSHTRG.

This is an uncharacterized protein from Gallid herpesvirus 2 (strain Chicken/Md5/ATCC VR-987) (GaHV-2).